The following is a 187-amino-acid chain: V-type ATP synthase subunit E (187 aa).

Belongs to the V-ATPase E subunit family.

Its function is as follows. Produces ATP from ADP in the presence of a proton gradient across the membrane. In Clostridioides difficile (strain 630) (Peptoclostridium difficile), this protein is V-type ATP synthase subunit E.